Here is a 320-residue protein sequence, read N- to C-terminus: Ribonuclease Z (320 aa).

Zn(2+) contacts are provided by His62, His64, Asp66, His67, His139, Asp210, and His268. Catalysis depends on Asp66, which acts as the Proton acceptor.

It belongs to the RNase Z family. Homodimer. It depends on Zn(2+) as a cofactor.

It carries out the reaction Endonucleolytic cleavage of RNA, removing extra 3' nucleotides from tRNA precursor, generating 3' termini of tRNAs. A 3'-hydroxy group is left at the tRNA terminus and a 5'-phosphoryl group is left at the trailer molecule.. Functionally, zinc phosphodiesterase, which displays some tRNA 3'-processing endonuclease activity. Probably involved in tRNA maturation, by removing a 3'-trailer from precursor tRNA. This Cyanothece sp. (strain PCC 7425 / ATCC 29141) protein is Ribonuclease Z.